Here is a 428-residue protein sequence, read N- to C-terminus: Serine--tRNA ligase (428 aa).

231-233 is an L-serine binding site; sequence TAE. 262 to 264 provides a ligand contact to ATP; that stretch reads RAE. Residue Glu285 coordinates L-serine. 349–352 contributes to the ATP binding site; the sequence is EISS. Ser385 is an L-serine binding site.

Belongs to the class-II aminoacyl-tRNA synthetase family. Type-1 seryl-tRNA synthetase subfamily. As to quaternary structure, homodimer. The tRNA molecule binds across the dimer.

The protein resides in the cytoplasm. The catalysed reaction is tRNA(Ser) + L-serine + ATP = L-seryl-tRNA(Ser) + AMP + diphosphate + H(+). It carries out the reaction tRNA(Sec) + L-serine + ATP = L-seryl-tRNA(Sec) + AMP + diphosphate + H(+). Its pathway is aminoacyl-tRNA biosynthesis; selenocysteinyl-tRNA(Sec) biosynthesis; L-seryl-tRNA(Sec) from L-serine and tRNA(Sec): step 1/1. Catalyzes the attachment of serine to tRNA(Ser). Is also able to aminoacylate tRNA(Sec) with serine, to form the misacylated tRNA L-seryl-tRNA(Sec), which will be further converted into selenocysteinyl-tRNA(Sec). This is Serine--tRNA ligase from Methylorubrum extorquens (strain PA1) (Methylobacterium extorquens).